The chain runs to 404 residues: Argininosuccinate synthase (404 aa).

Residues 10-18 (AYSGGLDTS) and Ala-37 each bind ATP. L-citrulline-binding residues include Tyr-88 and Ser-93. Residue Gly-118 coordinates ATP. L-aspartate contacts are provided by Thr-120, Asn-124, and Asp-125. Asn-124 serves as a coordination point for L-citrulline. Residues Arg-128, Ser-178, Ser-187, Glu-263, and Tyr-275 each contribute to the L-citrulline site.

The protein belongs to the argininosuccinate synthase family. Type 1 subfamily. Homotetramer.

It localises to the cytoplasm. It catalyses the reaction L-citrulline + L-aspartate + ATP = 2-(N(omega)-L-arginino)succinate + AMP + diphosphate + H(+). It participates in amino-acid biosynthesis; L-arginine biosynthesis; L-arginine from L-ornithine and carbamoyl phosphate: step 2/3. The chain is Argininosuccinate synthase from Hahella chejuensis (strain KCTC 2396).